The sequence spans 275 residues: Large ribosomal subunit protein uL2 (275 aa).

The segment at 222–275 (GKVMNPVDHPHGGGEGRNPIGRNPSTPWGKLAMGVKTRGNKKSDRLIVKRRNKK) is disordered.

It belongs to the universal ribosomal protein uL2 family. As to quaternary structure, part of the 50S ribosomal subunit. Forms a bridge to the 30S subunit in the 70S ribosome.

One of the primary rRNA binding proteins. Required for association of the 30S and 50S subunits to form the 70S ribosome, for tRNA binding and peptide bond formation. It has been suggested to have peptidyltransferase activity; this is somewhat controversial. Makes several contacts with the 16S rRNA in the 70S ribosome. In Desulforamulus reducens (strain ATCC BAA-1160 / DSM 100696 / MI-1) (Desulfotomaculum reducens), this protein is Large ribosomal subunit protein uL2.